The sequence spans 906 residues: DNA gyrase subunit A (906 aa).

Positions 35–524 constitute a Topo IIA-type catalytic domain; it reads IPDVRDGLKP…GEFDQDIEDL (490 aa). Tyr-123 serves as the catalytic O-(5'-phospho-DNA)-tyrosine intermediate. The GyrA-box signature appears at 551–557; that stretch reads QKRGGKG. A disordered region spans residues 886 to 906; that stretch reads SESEEDSELEEDLEQAEEVYT.

The protein belongs to the type II topoisomerase GyrA/ParC subunit family. In terms of assembly, heterotetramer, composed of two GyrA and two GyrB chains. In the heterotetramer, GyrA contains the active site tyrosine that forms a transient covalent intermediate with DNA, while GyrB binds cofactors and catalyzes ATP hydrolysis.

It localises to the cytoplasm. It carries out the reaction ATP-dependent breakage, passage and rejoining of double-stranded DNA.. In terms of biological role, a type II topoisomerase that negatively supercoils closed circular double-stranded (ds) DNA in an ATP-dependent manner to modulate DNA topology and maintain chromosomes in an underwound state. Negative supercoiling favors strand separation, and DNA replication, transcription, recombination and repair, all of which involve strand separation. Also able to catalyze the interconversion of other topological isomers of dsDNA rings, including catenanes and knotted rings. Type II topoisomerases break and join 2 DNA strands simultaneously in an ATP-dependent manner. This chain is DNA gyrase subunit A, found in Rickettsia felis (strain ATCC VR-1525 / URRWXCal2) (Rickettsia azadi).